The chain runs to 270 residues: uncharacterized protein (270 aa).

The first 22 residues, 1-22, serve as a signal peptide directing secretion; sequence MEYIKKLLCTMSVLLLIIFIGG. Residue C23 is the site of N-palmitoyl cysteine attachment. Residue C23 is the site of S-diacylglycerol cysteine attachment.

Belongs to the staphylococcal tandem lipoprotein family.

Its subcellular location is the cell membrane. This is an uncharacterized protein from Staphylococcus aureus (strain bovine RF122 / ET3-1).